We begin with the raw amino-acid sequence, 343 residues long: GTPase Obg (343 aa).

The region spanning 2 to 160 (EKFVDRVKIF…RWIILELKLI (159 aa)) is the Obg domain. An OBG-type G domain is found at 161 to 332 (ADVGLVGFPN…LKEGLWKKYE (172 aa)). Residues 167-174 (GFPNAGKS), 192-196 (FTTLS), 214-217 (DIPG), 284-287 (NKID), and 313-315 (SAL) each bind GTP. Mg(2+) is bound by residues Ser-174 and Thr-194.

This sequence belongs to the TRAFAC class OBG-HflX-like GTPase superfamily. OBG GTPase family. As to quaternary structure, monomer. It depends on Mg(2+) as a cofactor.

It localises to the cytoplasm. In terms of biological role, an essential GTPase which binds GTP, GDP and possibly (p)ppGpp with moderate affinity, with high nucleotide exchange rates and a fairly low GTP hydrolysis rate. Plays a role in control of the cell cycle, stress response, ribosome biogenesis and in those bacteria that undergo differentiation, in morphogenesis control. In Aquifex aeolicus (strain VF5), this protein is GTPase Obg.